Consider the following 481-residue polypeptide: Drebrin-like protein (481 aa).

The ADF-H domain occupies 3 to 131 (SLDISDPDIT…DEKAITAALN (129 aa)). Positions 217-227 (YWKQQQAEKQK) are enriched in basic and acidic residues. The tract at residues 217 to 423 (YWKQQQAEKQ…PAEEQYDQSG (207 aa)) is disordered. Over residues 228–237 (QQQQQQQQQA) the composition is skewed to low complexity. The span at 248 to 261 (TVGNKFQEQVSKPT) shows a compositional bias: polar residues. Positions 291 to 300 (PPAPSRPAAP) are enriched in pro residues. A compositionally biased stretch (acidic residues) spans 325–335 (QYEEPQYEEEQ). Residues 336-413 (QQQYEEQPTE…YQEEQQQYEQ (78 aa)) are compositionally biased toward low complexity. The 60-residue stretch at 422-481 (SGYLQAKALYDYNGENDGDLSFREGDIITILDQSDPDGWWQGSLPTGEQGFFPSNFVQQL) folds into the SH3 domain.

Belongs to the ABP1 family.

The protein resides in the cytoplasm. It is found in the cytoskeleton. The protein localises to the cell projection. It localises to the pseudopodium. Actin-binding adapter protein. Binds to F-actin but is not involved in actin polymerization, capping or bundling. Does not bind G-actin. Controls pseudopodium number and motility in early stages of chemotactic aggregation. The polypeptide is Drebrin-like protein (abpE-1) (Dictyostelium discoideum (Social amoeba)).